Consider the following 367-residue polypeptide: Phosphoribosylformylglycinamidine cyclo-ligase (367 aa).

This sequence belongs to the AIR synthase family.

It localises to the cytoplasm. The catalysed reaction is 2-formamido-N(1)-(5-O-phospho-beta-D-ribosyl)acetamidine + ATP = 5-amino-1-(5-phospho-beta-D-ribosyl)imidazole + ADP + phosphate + H(+). It functions in the pathway purine metabolism; IMP biosynthesis via de novo pathway; 5-amino-1-(5-phospho-D-ribosyl)imidazole from N(2)-formyl-N(1)-(5-phospho-D-ribosyl)glycinamide: step 2/2. The chain is Phosphoribosylformylglycinamidine cyclo-ligase from Cyanothece sp. (strain PCC 7425 / ATCC 29141).